The sequence spans 69 residues: Sec-independent protein translocase protein TatA (69 aa).

A helical transmembrane segment spans residues 1–21 (MFGLGTMEMVIILVIVLVIFG). Positions 44-69 (NAEDDAPAEPEVSKPAAAESTEKKDA) are disordered.

The protein belongs to the TatA/E family. The Tat system comprises two distinct complexes: a TatABC complex, containing multiple copies of TatA, TatB and TatC subunits, and a separate TatA complex, containing only TatA subunits. Substrates initially bind to the TatABC complex, which probably triggers association of the separate TatA complex to form the active translocon.

It localises to the cell inner membrane. Functionally, part of the twin-arginine translocation (Tat) system that transports large folded proteins containing a characteristic twin-arginine motif in their signal peptide across membranes. TatA could form the protein-conducting channel of the Tat system. The sequence is that of Sec-independent protein translocase protein TatA from Magnetococcus marinus (strain ATCC BAA-1437 / JCM 17883 / MC-1).